The primary structure comprises 483 residues: Probable zinc metalloprotease PTT_08196 (483 aa).

The N-terminal stretch at 1-18 is a signal peptide; sequence MLFRSVILSNALLLPACA. N-linked (GlcNAc...) asparagine glycosylation is found at Asn96 and Asn121. Zn(2+)-binding residues include His167, Asp187, and Glu220. A glycan (N-linked (GlcNAc...) asparagine) is linked at Asn235. Asp247 serves as a coordination point for Zn(2+). N-linked (GlcNAc...) asparagine glycosylation is found at Asn310, Asn362, Asn401, Asn411, and Asn421. Residues 396 to 483 enclose the Fibronectin type-III domain; sequence PAMPRNVTID…KSPAVYPFPA (88 aa).

This sequence belongs to the peptidase M28 family. M28B subfamily. Requires Zn(2+) as cofactor.

The protein resides in the secreted. This chain is Probable zinc metalloprotease PTT_08196, found in Pyrenophora teres f. teres (strain 0-1) (Barley net blotch fungus).